Consider the following 411-residue polypeptide: Aspartate kinase (411 aa).

The 84-residue stretch at 265–348 (LTIRGVPDTP…KIAKVSIVGV (84 aa)) folds into the ACT domain.

It belongs to the aspartokinase family.

The protein resides in the cytoplasm. It carries out the reaction L-aspartate + ATP = 4-phospho-L-aspartate + ADP. It functions in the pathway amino-acid biosynthesis; L-lysine biosynthesis via DAP pathway; (S)-tetrahydrodipicolinate from L-aspartate: step 1/4. Its pathway is amino-acid biosynthesis; L-methionine biosynthesis via de novo pathway; L-homoserine from L-aspartate: step 1/3. The protein operates within amino-acid biosynthesis; L-threonine biosynthesis; L-threonine from L-aspartate: step 1/5. Allosterically feedback inhibited by L-lysine and L-threonine individually and also subject to a concerted feedback inhibition by these amino acids. Involved in the biosynthesis of L-aspartate-beta-semialdehyde which is a central intermediate in the biosynthesis of different amino acids (L-lysine, L-methionine, L-threonine). Catalyzes the phosphorylation of the beta-carboxyl group of L-aspartate to yield 4-phospho-L-aspartate. The chain is Aspartate kinase from Pseudomonas putida (strain ATCC 47054 / DSM 6125 / CFBP 8728 / NCIMB 11950 / KT2440).